A 123-amino-acid chain; its full sequence is 13 kDa major membrane protein (123 aa).

It localises to the cell membrane. The protein is 13 kDa major membrane protein of Francisella tularensis subsp. holarctica (strain LVS).